Here is a 288-residue protein sequence, read N- to C-terminus: Transmembrane and coiled-coil domain-containing protein 5A (288 aa).

The stretch at 10 to 189 forms a coiled coil; sequence KKNIISLNMD…ELETGYLERE (180 aa). Residues 227-249 traverse the membrane as a helical segment; sequence SLLFSTLFFIRLLGYLIFHLSFI.

This sequence belongs to the TMCO5 family. Only detected in testis (at protein level).

The protein localises to the endoplasmic reticulum membrane. It localises to the nucleus membrane. This is Transmembrane and coiled-coil domain-containing protein 5A (Tmco5a) from Mus musculus (Mouse).